A 375-amino-acid polypeptide reads, in one-letter code: CC-adding tRNA nucleotidyltransferase (375 aa).

A CTP-binding site is contributed by 27 to 30 (GAVR). Mg(2+)-binding residues include Asp40 and Asp42. CTP is bound by residues 95 to 96 (RD), Asn100, 137 to 146 (DPLRMLRAPR), and Arg177.

The protein belongs to the tRNA nucleotidyltransferase/poly(A) polymerase family. It depends on Mg(2+) as a cofactor.

The enzyme catalyses a tRNA precursor + 2 CTP = a tRNA with a 3' CC end + 2 diphosphate. TRNA nucleotidyltransferase involved in the synthesis of the tRNA CCA terminus. Adds the two cytidine residues to tRNA. This is CC-adding tRNA nucleotidyltransferase from Halalkalibacterium halodurans (strain ATCC BAA-125 / DSM 18197 / FERM 7344 / JCM 9153 / C-125) (Bacillus halodurans).